A 204-amino-acid chain; its full sequence is Urease accessory protein UreG (204 aa).

GTP is bound at residue 11–18 (GPVGAGKT).

This sequence belongs to the SIMIBI class G3E GTPase family. UreG subfamily. As to quaternary structure, homodimer. UreD, UreF and UreG form a complex that acts as a GTP-hydrolysis-dependent molecular chaperone, activating the urease apoprotein by helping to assemble the nickel containing metallocenter of UreC. The UreE protein probably delivers the nickel.

Its subcellular location is the cytoplasm. Functionally, facilitates the functional incorporation of the urease nickel metallocenter. This process requires GTP hydrolysis, probably effectuated by UreG. The protein is Urease accessory protein UreG of Staphylococcus epidermidis (strain ATCC 35984 / DSM 28319 / BCRC 17069 / CCUG 31568 / BM 3577 / RP62A).